The sequence spans 123 residues: uncharacterized protein (123 aa).

Residues 1–24 (MLPLCLTFLSFFLSLGGSFKAVMT) form the signal peptide. The next 2 helical transmembrane spans lie at 39–59 (FWIF…ALAI) and 101–121 (FGGI…ALTG).

The protein localises to the membrane. This is an uncharacterized protein from Saccharomyces cerevisiae (strain ATCC 204508 / S288c) (Baker's yeast).